A 142-amino-acid polypeptide reads, in one-letter code: Large ribosomal subunit protein uL11 (142 aa).

It belongs to the universal ribosomal protein uL11 family. In terms of assembly, part of the ribosomal stalk of the 50S ribosomal subunit. Interacts with L10 and the large rRNA to form the base of the stalk. L10 forms an elongated spine to which L12 dimers bind in a sequential fashion forming a multimeric L10(L12)X complex. Post-translationally, one or more lysine residues are methylated.

Its function is as follows. Forms part of the ribosomal stalk which helps the ribosome interact with GTP-bound translation factors. The polypeptide is Large ribosomal subunit protein uL11 (Haemophilus influenzae (strain PittGG)).